Reading from the N-terminus, the 414-residue chain is CinA-like protein (414 aa).

The protein belongs to the CinA family.

This is CinA-like protein from Koribacter versatilis (strain Ellin345).